Consider the following 78-residue polypeptide: Putative DPH3 homolog B (78 aa).

The DPH-type MB domain maps to 4-60 (FHDEVEIEDFQYDEDSETYFCPCPCGDNFSITKEELENGEGVAMCPGCSLIIKVIYD). Positions 26, 28, 48, and 51 each coordinate Zn(2+).

Belongs to the DPH3 family.

The polypeptide is Putative DPH3 homolog B (DPH3P1) (Homo sapiens (Human)).